Here is a 311-residue protein sequence, read N- to C-terminus: 4-hydroxy-3-methylbut-2-enyl diphosphate reductase (311 aa).

Residue Cys12 coordinates [4Fe-4S] cluster. 2 residues coordinate (2E)-4-hydroxy-3-methylbut-2-enyl diphosphate: His41 and His74. His41 and His74 together coordinate dimethylallyl diphosphate. Positions 41 and 74 each coordinate isopentenyl diphosphate. [4Fe-4S] cluster is bound at residue Cys96. His124 contacts (2E)-4-hydroxy-3-methylbut-2-enyl diphosphate. Dimethylallyl diphosphate is bound at residue His124. Isopentenyl diphosphate is bound at residue His124. The Proton donor role is filled by Glu126. Position 168 (Thr168) interacts with (2E)-4-hydroxy-3-methylbut-2-enyl diphosphate. Cys198 contributes to the [4Fe-4S] cluster binding site. 4 residues coordinate (2E)-4-hydroxy-3-methylbut-2-enyl diphosphate: Ser226, Ser227, Asn228, and Ser270. Dimethylallyl diphosphate contacts are provided by Ser226, Ser227, Asn228, and Ser270. Isopentenyl diphosphate-binding residues include Ser226, Ser227, Asn228, and Ser270.

The protein belongs to the IspH family. The cofactor is [4Fe-4S] cluster.

It catalyses the reaction isopentenyl diphosphate + 2 oxidized [2Fe-2S]-[ferredoxin] + H2O = (2E)-4-hydroxy-3-methylbut-2-enyl diphosphate + 2 reduced [2Fe-2S]-[ferredoxin] + 2 H(+). The enzyme catalyses dimethylallyl diphosphate + 2 oxidized [2Fe-2S]-[ferredoxin] + H2O = (2E)-4-hydroxy-3-methylbut-2-enyl diphosphate + 2 reduced [2Fe-2S]-[ferredoxin] + 2 H(+). Its pathway is isoprenoid biosynthesis; dimethylallyl diphosphate biosynthesis; dimethylallyl diphosphate from (2E)-4-hydroxy-3-methylbutenyl diphosphate: step 1/1. It functions in the pathway isoprenoid biosynthesis; isopentenyl diphosphate biosynthesis via DXP pathway; isopentenyl diphosphate from 1-deoxy-D-xylulose 5-phosphate: step 6/6. Its function is as follows. Catalyzes the conversion of 1-hydroxy-2-methyl-2-(E)-butenyl 4-diphosphate (HMBPP) into a mixture of isopentenyl diphosphate (IPP) and dimethylallyl diphosphate (DMAPP). Acts in the terminal step of the DOXP/MEP pathway for isoprenoid precursor biosynthesis. In Alcanivorax borkumensis (strain ATCC 700651 / DSM 11573 / NCIMB 13689 / SK2), this protein is 4-hydroxy-3-methylbut-2-enyl diphosphate reductase.